The chain runs to 274 residues: MKNTDKKIAVFSNYKPQSKEVCQLLIKKLRQNRFILTDKNPDIVISVGGDGMLLSVFHKYEKQLDKVRFVGVHTGHLGFYTDYRDFEIDKLIDNLKLDTGAQVSYPILNVRIFLEDGSVKTKLALNEATIKRSDRTMVADVMINHVAFERFRGDGISVSTPTGSTAYNKSLGGAVLHPTIEALQIAEVASLNNRVYRTLGSSIIVPKKDKIEIFPTRNDQHTISVDNRTYTFKHIAKVEFQIDNHKIHFVASPSHTSFWNRVKDAFIGEVDDEI.

Residue aspartate 50 is the Proton acceptor of the active site. Residues 50 to 51 (DG), 126 to 127 (NE), arginine 152, aspartate 154, 165 to 170 (TAYNKS), and alanine 189 contribute to the NAD(+) site.

It belongs to the NAD kinase family. It depends on a divalent metal cation as a cofactor.

The protein resides in the cytoplasm. The catalysed reaction is NAD(+) + ATP = ADP + NADP(+) + H(+). Its function is as follows. Involved in the regulation of the intracellular balance of NAD and NADP, and is a key enzyme in the biosynthesis of NADP. Catalyzes specifically the phosphorylation on 2'-hydroxyl of the adenosine moiety of NAD to yield NADP. The protein is NAD kinase of Streptococcus gordonii (strain Challis / ATCC 35105 / BCRC 15272 / CH1 / DL1 / V288).